The sequence spans 683 residues: 1,4-alpha-glucan-branching enzyme (683 aa).

(1,4-alpha-D-glucosyl)n contacts are provided by Trp92 and Lys127. The Nucleophile role is filled by Asp342. Residue Glu397 is the Proton donor of the active site.

Belongs to the glycosyl hydrolase 13 family. GlgB subfamily.

It localises to the cytoplasm. The catalysed reaction is Transfers a segment of a (1-&gt;4)-alpha-D-glucan chain to a primary hydroxy group in a similar glucan chain.. Its pathway is glycan biosynthesis; glycogen biosynthesis. Glycogen-branching enzyme participates in the glycogen biosynthetic process along with glycogenin and glycogen synthase. Generates alpha-1,6-glucosidic branches from alpha-1,4-linked glucose chains, to increase solubility of the glycogen polymer. The protein is 1,4-alpha-glucan-branching enzyme (GLC3) of Rhizophagus irregularis (strain DAOM 181602 / DAOM 197198 / MUCL 43194) (Arbuscular mycorrhizal fungus).